The following is a 175-amino-acid chain: uncharacterized protein (175 aa).

Disordered regions lie at residues 68-112 (NKNN…DQPY) and 153-175 (PEKA…KLTT). The segment covering 94–105 (DEQPMMPYQQPP) has biased composition (low complexity).

Belongs to the asfivirus H171R family.

Its subcellular location is the virion. This is an uncharacterized protein from African swine fever virus (isolate Tick/Malawi/Lil 20-1/1983) (ASFV).